A 642-amino-acid polypeptide reads, in one-letter code: Serine/threonine-protein kinase pakA (642 aa).

Composition is skewed to polar residues over residues 1–12 (MSLKKQQQQSDF) and 38–48 (LRQSASFTALN). The disordered stretch occupies residues 1–82 (MSLKKQQQQS…GFGTKPRRKN (82 aa)). The CRIB domain occupies 100–113 (ISAPENPVHVTHVG). Disordered regions lie at residues 180–276 (GEYP…PIPE) and 317–338 (QLDR…RTRQ). Composition is skewed to low complexity over residues 217-227 (SQSSPVPVLSS) and 254-266 (VVSN…RPAN). The Protein kinase domain maps to 361-612 (YYNLNKIGQG…AHDLLKHPFM (252 aa)). ATP-binding positions include 367-375 (IGQGASGGV) and K390. Residue D480 is the Proton acceptor of the active site.

This sequence belongs to the protein kinase superfamily. STE Ser/Thr protein kinase family. STE20 subfamily.

The protein resides in the cytoplasm. The protein localises to the nucleus. The catalysed reaction is L-seryl-[protein] + ATP = O-phospho-L-seryl-[protein] + ADP + H(+). It catalyses the reaction L-threonyl-[protein] + ATP = O-phospho-L-threonyl-[protein] + ADP + H(+). MAP4K component of the MAPK pathway required for the mating pheromone response and the regulation of cell polarity and cell cycle. The sequence is that of Serine/threonine-protein kinase pakA (pakA) from Talaromyces marneffei (Penicillium marneffei).